Consider the following 198-residue polypeptide: ATP-dependent Clp protease proteolytic subunit (198 aa).

Catalysis depends on serine 98, which acts as the Nucleophile. Histidine 123 is a catalytic residue.

The protein belongs to the peptidase S14 family. Fourteen ClpP subunits assemble into 2 heptameric rings which stack back to back to give a disk-like structure with a central cavity, resembling the structure of eukaryotic proteasomes.

The protein resides in the cytoplasm. It catalyses the reaction Hydrolysis of proteins to small peptides in the presence of ATP and magnesium. alpha-casein is the usual test substrate. In the absence of ATP, only oligopeptides shorter than five residues are hydrolyzed (such as succinyl-Leu-Tyr-|-NHMec, and Leu-Tyr-Leu-|-Tyr-Trp, in which cleavage of the -Tyr-|-Leu- and -Tyr-|-Trp bonds also occurs).. Cleaves peptides in various proteins in a process that requires ATP hydrolysis. Has a chymotrypsin-like activity. Plays a major role in the degradation of misfolded proteins. The protein is ATP-dependent Clp protease proteolytic subunit of Levilactobacillus brevis (strain ATCC 367 / BCRC 12310 / CIP 105137 / JCM 1170 / LMG 11437 / NCIMB 947 / NCTC 947) (Lactobacillus brevis).